We begin with the raw amino-acid sequence, 205 residues long: High frequency lysogenization protein HflD homolog (205 aa).

Belongs to the HflD family.

It localises to the cytoplasm. Its subcellular location is the cell inner membrane. The protein is High frequency lysogenization protein HflD homolog of Haemophilus influenzae (strain 86-028NP).